We begin with the raw amino-acid sequence, 104 residues long: UPF0145 protein RD1_2695 (104 aa).

This sequence belongs to the UPF0145 family.

The polypeptide is UPF0145 protein RD1_2695 (Roseobacter denitrificans (strain ATCC 33942 / OCh 114) (Erythrobacter sp. (strain OCh 114))).